The sequence spans 464 residues: Histidine--tRNA ligase (464 aa).

This sequence belongs to the class-II aminoacyl-tRNA synthetase family. As to quaternary structure, homodimer.

Its subcellular location is the cytoplasm. The enzyme catalyses tRNA(His) + L-histidine + ATP = L-histidyl-tRNA(His) + AMP + diphosphate + H(+). This chain is Histidine--tRNA ligase, found in Stenotrophomonas maltophilia (strain K279a).